Consider the following 344-residue polypeptide: DnaJ homolog subfamily C member 25 (344 aa).

Residues 5 to 25 (WVLLVALSVLFLSGRAGALTE) traverse the membrane as a helical segment. The J domain maps to 33–108 (VCYDVLGVSR…ETRKDYDYML (76 aa)). A run of 2 helical transmembrane segments spans residues 134-154 (IVILVSVCAVSIFQYYSWWSS) and 228-248 (ILLFQIILFPYYMFKYISWYV).

The protein belongs to the DNAJC25 family.

Its subcellular location is the membrane. The protein is DnaJ homolog subfamily C member 25 (dnajc25) of Xenopus laevis (African clawed frog).